We begin with the raw amino-acid sequence, 424 residues long: Riboflavin biosynthesis protein RibBA (424 aa).

The interval 1 to 206 (MFTCEAGIAS…VDDLITYRYT (206 aa)) is DHBP synthase. D-ribulose 5-phosphate is bound by residues 32 to 33 (RE), Asp37, 145 to 149 (RPGHT), and Glu169. A Mg(2+)-binding site is contributed by Glu33. Residue His148 coordinates Mg(2+). Positions 207–424 (YDSLVTKISS…YETVERMSCR (218 aa)) are GTP cyclohydrolase II. Residue 257-261 (RVHSE) participates in GTP binding. Zn(2+) contacts are provided by Cys262, Cys273, and Cys275. GTP-binding positions include Gln278, 301–303 (EGR), and Thr323. Asp335 acts as the Proton acceptor; for GTP cyclohydrolase activity in catalysis. Catalysis depends on Arg337, which acts as the Nucleophile; for GTP cyclohydrolase activity. Thr358 and Lys363 together coordinate GTP.

This sequence in the N-terminal section; belongs to the DHBP synthase family. In the C-terminal section; belongs to the GTP cyclohydrolase II family. It depends on Mg(2+) as a cofactor. Mn(2+) serves as cofactor. Zn(2+) is required as a cofactor.

The catalysed reaction is D-ribulose 5-phosphate = (2S)-2-hydroxy-3-oxobutyl phosphate + formate + H(+). The enzyme catalyses GTP + 4 H2O = 2,5-diamino-6-hydroxy-4-(5-phosphoribosylamino)-pyrimidine + formate + 2 phosphate + 3 H(+). It participates in cofactor biosynthesis; riboflavin biosynthesis; 2-hydroxy-3-oxobutyl phosphate from D-ribulose 5-phosphate: step 1/1. Its pathway is cofactor biosynthesis; riboflavin biosynthesis; 5-amino-6-(D-ribitylamino)uracil from GTP: step 1/4. In terms of biological role, catalyzes the conversion of D-ribulose 5-phosphate to formate and 3,4-dihydroxy-2-butanone 4-phosphate. Catalyzes the conversion of GTP to 2,5-diamino-6-ribosylamino-4(3H)-pyrimidinone 5'-phosphate (DARP), formate and pyrophosphate. This is Riboflavin biosynthesis protein RibBA from Chlamydia trachomatis serovar D (strain ATCC VR-885 / DSM 19411 / UW-3/Cx).